The primary structure comprises 1044 residues: Isoleucine--tRNA ligase (1044 aa).

A 'HIGH' region motif is present at residues 48-58; sequence PFATGLPHFGH. The 'KMSKS' region motif lies at 594-598; the sequence is KMSKS. An ATP-binding site is contributed by lysine 597.

Belongs to the class-I aminoacyl-tRNA synthetase family. IleS type 2 subfamily. Monomer. Requires Zn(2+) as cofactor.

The protein resides in the cytoplasm. The enzyme catalyses tRNA(Ile) + L-isoleucine + ATP = L-isoleucyl-tRNA(Ile) + AMP + diphosphate. Functionally, catalyzes the attachment of isoleucine to tRNA(Ile). As IleRS can inadvertently accommodate and process structurally similar amino acids such as valine, to avoid such errors it has two additional distinct tRNA(Ile)-dependent editing activities. One activity is designated as 'pretransfer' editing and involves the hydrolysis of activated Val-AMP. The other activity is designated 'posttransfer' editing and involves deacylation of mischarged Val-tRNA(Ile). This chain is Isoleucine--tRNA ligase, found in Borrelia turicatae (strain 91E135).